The chain runs to 201 residues: Holliday junction branch migration complex subunit RuvA (201 aa).

The tract at residues 1–63 (MIAFVSGTVA…EDSLTLYGFA (63 aa)) is domain I. A domain II region spans residues 64–139 (DDDERQVFEL…RLGEPIGAPA (76 aa)). Positions 139 to 143 (AVGAP) are flexible linker. Residues 144-201 (VSTGWRDQLHAALIGLGYATREADEAVSAVAPQAEAAGGTPQVGALLKAALQTLNRAR) form a domain III region.

Belongs to the RuvA family. As to quaternary structure, homotetramer. Forms an RuvA(8)-RuvB(12)-Holliday junction (HJ) complex. HJ DNA is sandwiched between 2 RuvA tetramers; dsDNA enters through RuvA and exits via RuvB. An RuvB hexamer assembles on each DNA strand where it exits the tetramer. Each RuvB hexamer is contacted by two RuvA subunits (via domain III) on 2 adjacent RuvB subunits; this complex drives branch migration. In the full resolvosome a probable DNA-RuvA(4)-RuvB(12)-RuvC(2) complex forms which resolves the HJ.

It localises to the cytoplasm. Its function is as follows. The RuvA-RuvB-RuvC complex processes Holliday junction (HJ) DNA during genetic recombination and DNA repair, while the RuvA-RuvB complex plays an important role in the rescue of blocked DNA replication forks via replication fork reversal (RFR). RuvA specifically binds to HJ cruciform DNA, conferring on it an open structure. The RuvB hexamer acts as an ATP-dependent pump, pulling dsDNA into and through the RuvAB complex. HJ branch migration allows RuvC to scan DNA until it finds its consensus sequence, where it cleaves and resolves the cruciform DNA. The protein is Holliday junction branch migration complex subunit RuvA of Streptomyces coelicolor (strain ATCC BAA-471 / A3(2) / M145).